A 152-amino-acid chain; its full sequence is Protein SprT-like (152 aa).

One can recognise a SprT-like domain in the interval asparagine 13–leucine 148. Residue histidine 72 participates in Zn(2+) binding. Residue glutamate 73 is part of the active site. Histidine 76 is a binding site for Zn(2+).

It belongs to the SprT family. Zn(2+) serves as cofactor.

Its subcellular location is the cytoplasm. In Streptococcus agalactiae serotype III (strain NEM316), this protein is Protein SprT-like.